Consider the following 311-residue polypeptide: Natural killer cell receptor 2B4 (311 aa).

An N-terminal signal peptide occupies residues 1-19 (MLQQTVLLSLFLLLRAHQG). At 20 to 223 (QDCADSSEEV…CQSVPSKFNY (204 aa)) the chain is on the extracellular side. Cys22 and Cys118 are joined by a disulfide. 2 consecutive Ig-like domains span residues 22-128 (CADS…LIFD) and 131-215 (ETPH…QSCQ). Asn101, Asn144, Asn160, Asn183, Asn196, and Asn205 each carry an N-linked (GlcNAc...) asparagine glycan. Cysteines 153 and 195 form a disulfide. Residues 224–247 (LPFMVSIGILVKFFHGAIDCFCVW) form a helical membrane-spanning segment. At 248 to 311 (NRKRKQSQSI…RRLFQFINRS (64 aa)) the chain is on the cytoplasmic side. The segment at 275 to 301 (RDQRGHFRASGSSSDVRGDERGQRESD) is disordered. The segment covering 290–301 (VRGDERGQRESD) has biased composition (basic and acidic residues).

In terms of assembly, interacts with CD48. Interacts (via phosphorylated ITSM 1-4) with SH2D1A (via SH2 domain); SH2D1A probably mediates association with FYN. Interacts (via phosphorylated ITSM 3) with PTPN11/SHP-2, INPP5D/SHIP1, PTPN6/SHP-1 and CSK; binding of SH2D1A/SAP prevents association with PTPN11, PTPN6 and CSK; conflictingly a similar association has been described for phosphorylated ITSM 1 also including GRB2 and PLCG1. Interacts weakly (via phosphorylated ITSM 2) with PTPN11/SHP-2 and CSK. Interacts with SH2D1B. Interacts with PIK3R1; PI3K recruits SH2D1A. Interacts with MHC class I proteins; the interaction is proposed to prevent self-killing of NK cells. Post-translationally, N-linked glycosylation is essential for the binding to its ligand CD48. Also O-glycosylated, in contrast, O-linked sialylation has a negative impact on ligand binding. In terms of processing, phosphorylated by FYN and CSK on tyrosine residues following activation. Coligation with inhibitory receptors such as KIR2DL1 inhibits phosphorylation upon contact of NK cells with sensitive target cells.

It is found in the membrane. It localises to the cell membrane. The protein localises to the membrane raft. Heterophilic receptor of the signaling lymphocytic activation molecule (SLAM) family; its ligand is CD48. SLAM receptors triggered by homo- or heterotypic cell-cell interactions are modulating the activation and differentiation of a wide variety of immune cells and thus are involved in the regulation and interconnection of both innate and adaptive immune response. Activities are controlled by presence or absence of small cytoplasmic adapter proteins, SH2D1A/SAP and/or SH2D1B/EAT-2. Acts as activating natural killer (NK) cell receptor. Activating function implicates association with SH2D1A and FYN. Downstreaming signaling involves predominantly VAV1, and, to a lesser degree, INPP5D/SHIP1 and CBL. Signal attenuation in the absence of SH2D1A is proposed to be dependent on INPP5D and to a lesser extent PTPN6/SHP-1 and PTPN11/SHP-2. Stimulates NK cell cytotoxicity, production of IFN-gamma and granule exocytosis. Optimal expansion and activation of NK cells seems to be dependent on the engagement of CD244 with CD48 expressed on neighboring NK cells. Acts as costimulator in NK activation by enhancing signals by other NK receptors such as NCR3 and NCR1. At early stages of NK cell differentiation may function as an inhibitory receptor possibly ensuring the self-tolerance of developing NK cells. Involved in the regulation of CD8(+) T-cell proliferation; expression on activated T-cells and binding to CD48 provides costimulatory-like function for neighboring T-cells. Inhibits inflammatory responses in dendritic cells (DCs). This is Natural killer cell receptor 2B4 (Cd244) from Rattus norvegicus (Rat).